Consider the following 255-residue polypeptide: Malonyl-[acyl-carrier protein] O-methyltransferase (255 aa).

It belongs to the methyltransferase superfamily.

The catalysed reaction is malonyl-[ACP] + S-adenosyl-L-methionine = malonyl-[ACP] methyl ester + S-adenosyl-L-homocysteine. It participates in cofactor biosynthesis; biotin biosynthesis. Its function is as follows. Converts the free carboxyl group of a malonyl-thioester to its methyl ester by transfer of a methyl group from S-adenosyl-L-methionine (SAM). It allows to synthesize pimeloyl-ACP via the fatty acid synthetic pathway. This chain is Malonyl-[acyl-carrier protein] O-methyltransferase, found in Porphyromonas gingivalis (strain ATCC BAA-308 / W83).